Reading from the N-terminus, the 320-residue chain is Olfactory receptor 2W1 (320 aa).

The Extracellular portion of the chain corresponds to 1-25 (MDQSNYSSLHGFILLGFSNHPKMEM). The N-linked (GlcNAc...) asparagine glycan is linked to asparagine 5. A helical membrane pass occupies residues 26-49 (ILSGVVAIFYLITLVGNTAIILAS). At 50 to 57 (LLDSQLHT) the chain is on the cytoplasmic side. The chain crosses the membrane as a helical span at residues 58–79 (PMYFFLRNLSFLDLCFTTSIIP). At 80–100 (QMLVNLWGPDKTISYVGCIIQ) the chain is on the extracellular side. Cysteines 97 and 189 form a disulfide. A helical transmembrane segment spans residues 101-120 (LYVYMWLGSVECLLLAVMSY). Topologically, residues 121-139 (DRFTAICKPLHYFVVMNPH) are cytoplasmic. A helical membrane pass occupies residues 140–158 (LCLKMIIMIWSISLANSVV). Residues 159–195 (LCTLTLNLPTCGNNILDHFLCELPALVKIACVDTTTV) are Extracellular-facing. The helical transmembrane segment at 196-219 (EMSVFALGIIIVLTPLILILISYG) threads the bilayer. At 220–236 (YIAKAVLRTKSKASQRK) the chain is on the cytoplasmic side. Residues 237 to 259 (AMNTCGSHLTVVSMFYGTIIYMY) traverse the membrane as a helical segment. Residues 260–272 (LQPGNRASKDQGK) lie on the Extracellular side of the membrane. The chain crosses the membrane as a helical span at residues 273-292 (FLTLFYTVITPSLNPLIYTL). The Cytoplasmic portion of the chain corresponds to 293-320 (RNKDMKDALKKLMRFHHKSTKIKRNCKS).

Belongs to the G-protein coupled receptor 1 family.

The protein resides in the cell membrane. In terms of biological role, odorant receptor. The sequence is that of Olfactory receptor 2W1 (OR2W1) from Homo sapiens (Human).